Consider the following 80-residue polypeptide: Cell division activator CedA (80 aa).

This sequence belongs to the CedA family.

Functionally, activates the cell division inhibited by chromosomal DNA over-replication. The chain is Cell division activator CedA from Salmonella choleraesuis (strain SC-B67).